A 348-amino-acid polypeptide reads, in one-letter code: UDP-rhamnose/UDP-galactose transporter 2 (348 aa).

Transmembrane regions (helical) follow at residues 12-32 (AVSD…IIMA), 44-64 (FSFA…VGMV), 81-101 (LLWF…SLML), 104-124 (VGFY…MEWV), 133-153 (EVKA…VTDV), 160-180 (FICA…IGSL), 196-216 (APIQ…FLSG), 230-250 (LCIL…YLCI), 257-277 (SFQV…WLIF), and 286-306 (IAGM…VELE).

It belongs to the TPT transporter family. TPT (TC 2.A.7.9) subfamily.

It is found in the golgi apparatus membrane. In terms of biological role, nucleotide-sugar transporter that transports UDP-rhamnose or UDP-galactose and UMP in a strict counter-exchange mode. This chain is UDP-rhamnose/UDP-galactose transporter 2, found in Arabidopsis thaliana (Mouse-ear cress).